We begin with the raw amino-acid sequence, 1326 residues long: Coiled-coil domain-containing protein 171 (1326 aa).

8 coiled-coil regions span residues 53–294 (TTKH…RAAH), 323–391 (AEAV…RLQY), 450–561 (SFSV…AFHK), 597–630 (SELC…ICKN), 660–707 (WHRQ…EQLV), 765–792 (FKLE…MKKK), 979–1143 (FTQR…KECV), and 1217–1241 (IMTL…LHTA). The disordered stretch occupies residues 1306-1326 (SSHSSPVTMSANANRPTQIGL).

This is Coiled-coil domain-containing protein 171 (CCDC171) from Homo sapiens (Human).